The chain runs to 114 residues: UPF0342 protein LSEI_1724 (114 aa).

This sequence belongs to the UPF0342 family.

The chain is UPF0342 protein LSEI_1724 from Lacticaseibacillus paracasei (strain ATCC 334 / BCRC 17002 / CCUG 31169 / CIP 107868 / KCTC 3260 / NRRL B-441) (Lactobacillus paracasei).